Here is a 56-residue protein sequence, read N- to C-terminus: Ferredoxin (56 aa).

4Fe-4S ferredoxin-type domains are found at residues 2–28 and 29–56; these read AYKIADSCVSCGACASECPVNAISQGD and SIFVIDADTCIDCGNCANVCPVGAPVQE. Cys-9, Cys-12, Cys-15, Cys-19, Cys-38, Cys-41, Cys-44, and Cys-48 together coordinate [4Fe-4S] cluster.

[4Fe-4S] cluster serves as cofactor.

In terms of biological role, ferredoxins are iron-sulfur proteins that transfer electrons in a wide variety of metabolic reactions. The protein is Ferredoxin of Clostridium pasteurianum.